Here is a 205-residue protein sequence, read N- to C-terminus: NADH dehydrogenase (205 aa).

FMN is bound by residues 17 to 21 (RRSIR), glutamine 73, 158 to 159 (LG), and arginine 195.

Belongs to the nitroreductase family. Homodimer. FMN serves as cofactor.

It carries out the reaction a ubiquinone + NADH + 5 H(+)(in) = a ubiquinol + NAD(+) + 4 H(+)(out). In terms of biological role, can oxidize either NADH or NADPH with a preference for NADH. Can catalyze electron transfer from NADH to various electron acceptors which include, in addition to molecular oxygen, cytochrome c, 2,6 dichlorphenolindophenol, methylene blue, ferricyanide or P-nitroblue tetrazolium. The sequence is that of NADH dehydrogenase (nox) from Thermus thermophilus (strain ATCC 27634 / DSM 579 / HB8).